The sequence spans 393 residues: MTVPATRKDLMIVNMGPHHPSMHGVLRLIVTLDGEDVIDCEPVLGYLHRGMEKIAENRTIIQYLPYVTRWDYLATMFTEAITVNAPEQLGNIQVPKRASYIRAIMLELSRIASHLLWLGPFMADIGAQTPFFYIFRERELIYDLFEAATGMRMMHNYFRIGGVAADLPHGWIDKCLDFCDYFLTGIAEYQKLITRNPIFLERVEGVGIIGGEEAINWGLSGPMLRASGIQWDLRKVDHYGCYDEFDWEVQWQKEGDSLARYLVRISEMTESVKIIQQALEGIPGGPYENLEVRRFDRARDSEWNDFEYRFISKKPSPTFELSKQELYVRVEAPKGELGIFLIGDQSVFPWRWKIRPPGFINLQILPQLVKRMKLADIMTILGSIDIIMGEVDR.

The protein belongs to the complex I 49 kDa subunit family. In terms of assembly, NDH is composed of at least 16 different subunits, 5 of which are encoded in the nucleus.

The protein resides in the plastid. Its subcellular location is the chloroplast thylakoid membrane. It catalyses the reaction a plastoquinone + NADH + (n+1) H(+)(in) = a plastoquinol + NAD(+) + n H(+)(out). The catalysed reaction is a plastoquinone + NADPH + (n+1) H(+)(in) = a plastoquinol + NADP(+) + n H(+)(out). In terms of biological role, NDH shuttles electrons from NAD(P)H:plastoquinone, via FMN and iron-sulfur (Fe-S) centers, to quinones in the photosynthetic chain and possibly in a chloroplast respiratory chain. The immediate electron acceptor for the enzyme in this species is believed to be plastoquinone. Couples the redox reaction to proton translocation, and thus conserves the redox energy in a proton gradient. This Platanus occidentalis (Sycamore) protein is NAD(P)H-quinone oxidoreductase subunit H, chloroplastic.